The chain runs to 214 residues: Charged multivesicular body protein 2b (214 aa).

The stretch at 16–55 forms a coiled coil; sequence EQNKELRGTQRAITRDRAALEKQEKQLEMEIKKMAKAGNK. The segment at 178 to 203 is disordered; sequence MAKAPSAAKGLPSTSASKSSGISDEE. Residues 189–199 show a composition bias toward polar residues; it reads PSTSASKSSGI. Residues 202–212 carry the MIT-interacting motif motif; it reads EEIERQLKALG.

Belongs to the SNF7 family. Probable core component of the endosomal sorting required for transport complex III (ESCRT-III). ESCRT-III components are thought to multimerize to form a flat lattice on the perimeter membrane of the endosome.

It is found in the cytoplasm. It localises to the cytosol. The protein resides in the late endosome membrane. Probable core component of the endosomal sorting required for transport complex III (ESCRT-III) which is involved in multivesicular bodies (MVBs) formation and sorting of endosomal cargo proteins into MVBs. MVBs contain intraluminal vesicles (ILVs) that are generated by invagination and scission from the limiting membrane of the endosome and mostly are delivered to lysosomes enabling degradation of membrane proteins, such as stimulated growth factor receptors, lysosomal enzymes and lipids. This Xenopus tropicalis (Western clawed frog) protein is Charged multivesicular body protein 2b (chmp2b).